We begin with the raw amino-acid sequence, 431 residues long: Adenylosuccinate synthetase (431 aa).

Residues 13 to 19 (GDEGKGK) and 41 to 43 (GHT) contribute to the GTP site. The Proton acceptor role is filled by Asp-14. Positions 14 and 41 each coordinate Mg(2+). IMP contacts are provided by residues 14–17 (DEGK), 39–42 (NAGH), Thr-130, Arg-144, Gln-225, Thr-240, and Arg-304. Catalysis depends on His-42, which acts as the Proton donor. 300–306 (AVTGRPR) contributes to the substrate binding site. Residues Arg-306, 332–334 (KLD), and 415–417 (STG) contribute to the GTP site.

This sequence belongs to the adenylosuccinate synthetase family. Homodimer. Mg(2+) serves as cofactor.

It is found in the cytoplasm. It catalyses the reaction IMP + L-aspartate + GTP = N(6)-(1,2-dicarboxyethyl)-AMP + GDP + phosphate + 2 H(+). It participates in purine metabolism; AMP biosynthesis via de novo pathway; AMP from IMP: step 1/2. In terms of biological role, plays an important role in the de novo pathway of purine nucleotide biosynthesis. Catalyzes the first committed step in the biosynthesis of AMP from IMP. This is Adenylosuccinate synthetase from Legionella pneumophila subsp. pneumophila (strain Philadelphia 1 / ATCC 33152 / DSM 7513).